A 400-amino-acid chain; its full sequence is Iron(III) enterobactin esterase (400 aa).

It belongs to the Fes family.

The protein resides in the cytoplasm. It carries out the reaction Fe(III)-enterobactin + 3 H2O + H(+) = Fe(III)-[N-(2,3-dihydroxybenzoyl)-L-serine] + 2 N-(2,3-dihydroxybenzoyl)-L-serine. The enzyme catalyses Fe(III)-enterobactin + H2O = Fe(III)-[N-(2,3-dihydroxybenzoyl)-L-serine]3 + H(+). It catalyses the reaction Fe(III)-[N-(2,3-dihydroxybenzoyl)-L-serine]3 + H2O + H(+) = Fe(III)-[N-(2,3-dihydroxybenzoyl)-L-serine]2 + N-(2,3-dihydroxybenzoyl)-L-serine. The catalysed reaction is Fe(III)-[N-(2,3-dihydroxybenzoyl)-L-serine]2 + H2O + H(+) = Fe(III)-[N-(2,3-dihydroxybenzoyl)-L-serine] + N-(2,3-dihydroxybenzoyl)-L-serine. It carries out the reaction enterobactin + 3 H2O = 3 N-(2,3-dihydroxybenzoyl)-L-serine + 2 H(+). Functionally, catalyzes the hydrolysis of ferric enterobactin (Fe-Ent). Is responsible for the release of iron from ferric enterobactin. Also catalyzes the hydrolysis of iron-free enterobactin (Ent). Hydrolyzes ferric monoglucosyl-C-Ent (Fe-MGE) poorly and does not hydrolyze ferric diglucosyl-C-Ent (Fe-DGE) or ferric triglucosyl-C-Ent (Fe-TGE) at all. Also hydrolyzes apo MGE, but catalyzes the hydrolysis of apo DGE very poorly, and does not process apo TGE at all. The catalytic efficiency for processing Fe-Ent is much higher than that for apo Ent, suggesting that Fe-Ent is the physiological substrate. This is Iron(III) enterobactin esterase from Escherichia coli O6:H1 (strain CFT073 / ATCC 700928 / UPEC).